The sequence spans 415 residues: Tyrosine--tRNA ligase (415 aa).

The short motif at 54 to 63 (PTGSNIHLGH) is the 'HIGH' region element. The 'KMSKS' region motif lies at 248 to 252 (KMSKS). Residue Lys251 coordinates ATP. Positions 351–414 (AKAFYLFSAV…LGKKTFRRLV (64 aa)) constitute an S4 RNA-binding domain.

It belongs to the class-I aminoacyl-tRNA synthetase family. TyrS type 2 subfamily. In terms of assembly, homodimer.

It is found in the cytoplasm. It catalyses the reaction tRNA(Tyr) + L-tyrosine + ATP = L-tyrosyl-tRNA(Tyr) + AMP + diphosphate + H(+). Its function is as follows. Catalyzes the attachment of tyrosine to tRNA(Tyr) in a two-step reaction: tyrosine is first activated by ATP to form Tyr-AMP and then transferred to the acceptor end of tRNA(Tyr). This is Tyrosine--tRNA ligase from Synechococcus sp. (strain CC9605).